The sequence spans 251 residues: Aliphatic sulfonates import ATP-binding protein SsuB (251 aa).

Residues 3-231 (VSINEVSKYF…PRNKTSQSFQ (229 aa)) form the ABC transporter domain. Residue 39–46 (GPSGCGKS) participates in ATP binding.

The protein belongs to the ABC transporter superfamily. Aliphatic sulfonates importer (TC 3.A.1.17.2) family. In terms of assembly, the complex is composed of two ATP-binding proteins (SsuB), two transmembrane proteins (SsuC) and a solute-binding protein (SsuA).

Its subcellular location is the cell membrane. The catalysed reaction is ATP + H2O + aliphatic sulfonate-[sulfonate-binding protein]Side 1 = ADP + phosphate + aliphatic sulfonateSide 2 + [sulfonate-binding protein]Side 1.. Part of the ABC transporter complex SsuABC involved in aliphatic sulfonates import. Responsible for energy coupling to the transport system. In Bacillus anthracis, this protein is Aliphatic sulfonates import ATP-binding protein SsuB.